Consider the following 447-residue polypeptide: N-succinylarginine dihydrolase (447 aa).

Residues 19-28, N110, and 137-138 contribute to the substrate site; these read AGLSFGNEAS and HR. E174 is a catalytic residue. R213 provides a ligand contact to substrate. H249 is an active-site residue. Substrate contacts are provided by D251 and N364. C370 acts as the Nucleophile in catalysis.

The protein belongs to the succinylarginine dihydrolase family. In terms of assembly, homodimer.

It carries out the reaction N(2)-succinyl-L-arginine + 2 H2O + 2 H(+) = N(2)-succinyl-L-ornithine + 2 NH4(+) + CO2. It functions in the pathway amino-acid degradation; L-arginine degradation via AST pathway; L-glutamate and succinate from L-arginine: step 2/5. Its function is as follows. Catalyzes the hydrolysis of N(2)-succinylarginine into N(2)-succinylornithine, ammonia and CO(2). The chain is N-succinylarginine dihydrolase from Yersinia pestis bv. Antiqua (strain Antiqua).